Reading from the N-terminus, the 530-residue chain is GMP synthase [glutamine-hydrolyzing] (530 aa).

The Glutamine amidotransferase type-1 domain occupies 18 to 207; it reads TILVLDFGSQ…AVDICQAKTN (190 aa). Cysteine 94 (nucleophile) is an active-site residue. Active-site residues include histidine 181 and glutamate 183. A GMPS ATP-PPase domain is found at 208-405; it reads WSMENFIDTE…LGVPEDLVWR (198 aa). 236 to 242 serves as a coordination point for ATP; the sequence is SGGVDST. The XMP site is built by arginine 309, aspartate 467, lysine 522, and glutamate 528.

As to quaternary structure, homodimer. The cofactor is Mg(2+).

It is found in the cytoplasm. The protein localises to the cytosol. It catalyses the reaction XMP + L-glutamine + ATP + H2O = GMP + L-glutamate + AMP + diphosphate + 2 H(+). It functions in the pathway purine metabolism; GMP biosynthesis; GMP from XMP (L-Gln route): step 1/1. In terms of biological role, catalyzes the conversion of xanthine monophosphate (XMP) to GMP in the presence of glutamine and ATP through an adenyl-XMP intermediate. In Candida albicans (strain SC5314 / ATCC MYA-2876) (Yeast), this protein is GMP synthase [glutamine-hydrolyzing] (GUA1).